The primary structure comprises 278 residues: Putative cuticle collagen 91 (278 aa).

Disordered stretches follow at residues 84–109 and 140–278; these read LAKNCPPGPPGPPGAPGAAGEPGVDG and GPAG…SVRQ. Over residues 89–98 the composition is skewed to pro residues; it reads PPGPPGPPGA. Triple-helical region stretches follow at residues 91–120, 137–199, and 202–264; these read GPPGPPGAPGAAGEPGVDGDAGAAGIDGVA, GEAG…NGQR, and GTPG…PGPD. Residues 99–109 are compositionally biased toward low complexity; it reads PGAAGEPGVDG. Gly residues predominate over residues 158–167; sequence GADGQGGAPG. 2 stretches are compositionally biased toward low complexity: residues 172 to 228 and 236 to 245; these read EGPA…AGAP and APGVDGQPGA.

This sequence belongs to the cuticular collagen family. In terms of assembly, collagen polypeptide chains are complexed within the cuticle by disulfide bonds and other types of covalent cross-links.

In terms of biological role, nematode cuticles are composed largely of collagen-like proteins. The cuticle functions both as an exoskeleton and as a barrier to protect the worm from its environment. The sequence is that of Putative cuticle collagen 91 (col-91) from Caenorhabditis elegans.